The sequence spans 411 residues: Serpin A12 (411 aa).

A signal peptide spans 1 to 20; the sequence is MNLVLGLGLFLAGLLTVKGL. N-linked (GlcNAc...) asparagine glycosylation is found at Asn-92 and Asn-267. Residues 364-382 form a reactive center loop region; that stretch reads GTEGAAGSGAQTLPMETPR.

It belongs to the serpin family. In terms of assembly, forms a stable complex with KLK7. Glycosylation slightly decreases affinity for heparin, but otherwise has no significant effect on KLK7 inhibitory activity or thermal stability of the protein. In terms of tissue distribution, expressed in visceral adipose tissues.

It is found in the secreted. Inhibition of KLK7 is enhanced by heparin. Functionally, adipokine that modulates insulin action by specifically inhibiting its target protease KLK7 in white adipose tissues. The protein is Serpin A12 (Serpina12) of Rattus norvegicus (Rat).